Here is a 323-residue protein sequence, read N- to C-terminus: Annexin A5 (323 aa).

4 Annexin repeats span residues Phe17 to Val88, Pro89 to Gln160, Gly172 to Lys244, and Ser248 to Gly319.

It belongs to the annexin family.

Its function is as follows. Calcium/phospholipid-binding protein which promotes membrane fusion and is involved in exocytosis. The chain is Annexin A5 from Cynops pyrrhogaster (Japanese fire-bellied newt).